Consider the following 200-residue polypeptide: Holliday junction branch migration complex subunit RuvA (200 aa).

Residues 1–64 are domain I; it reads MYAYFRGRVV…EDALQLYGFS (64 aa). Residues 65–143 are domain II; sequence SEEEKQLFRL…KLSPPGAAAT (79 aa). Residues 144 to 154 are flexible linker; sequence PAGAVQCGIRE. The interval 154–200 is domain III; that stretch reads EDATNALLTLGFSRTAAQQAVAGVLEANPGGSVEDVVKSALLAMHNR.

It belongs to the RuvA family. As to quaternary structure, homotetramer. Forms an RuvA(8)-RuvB(12)-Holliday junction (HJ) complex. HJ DNA is sandwiched between 2 RuvA tetramers; dsDNA enters through RuvA and exits via RuvB. An RuvB hexamer assembles on each DNA strand where it exits the tetramer. Each RuvB hexamer is contacted by two RuvA subunits (via domain III) on 2 adjacent RuvB subunits; this complex drives branch migration. In the full resolvosome a probable DNA-RuvA(4)-RuvB(12)-RuvC(2) complex forms which resolves the HJ.

It localises to the cytoplasm. In terms of biological role, the RuvA-RuvB-RuvC complex processes Holliday junction (HJ) DNA during genetic recombination and DNA repair, while the RuvA-RuvB complex plays an important role in the rescue of blocked DNA replication forks via replication fork reversal (RFR). RuvA specifically binds to HJ cruciform DNA, conferring on it an open structure. The RuvB hexamer acts as an ATP-dependent pump, pulling dsDNA into and through the RuvAB complex. HJ branch migration allows RuvC to scan DNA until it finds its consensus sequence, where it cleaves and resolves the cruciform DNA. This Chlorobium luteolum (strain DSM 273 / BCRC 81028 / 2530) (Pelodictyon luteolum) protein is Holliday junction branch migration complex subunit RuvA.